Here is a 1124-residue protein sequence, read N- to C-terminus: Transient-receptor-potential-like protein (1124 aa).

Residues 1 to 24 form a disordered region; that stretch reads MGRKKKLPTGVSSGVSHASSAPKS. Residues 1–340 are Cytoplasmic-facing; that stretch reads MGRKKKLPTG…GFRRKSIVDK (340 aa). Residues 10–21 show a composition bias toward low complexity; sequence GVSSGVSHASSA. ANK repeat units follow at residues 40-69, 78-107, and 152-181; these read LEEKKFLLAVERGDMPNVRRILQKALRHQH, LGRRALTLAIDNENLEMVELLVVMGVETKD, and PDITPLMLAAHKNNFEILRILLDRGAAVPV. A helical membrane pass occupies residues 341-361; the sequence is VICIAQVAVLFPLYCLIYMCA. Topologically, residues 362–373 are extracellular; it reads PNCRTGQLMRKP. The helical transmembrane segment at 374–394 threads the bilayer; the sequence is FMKFLIHASSYLFFLFILILV. The Cytoplasmic segment spans residues 395–431; sequence SQRADDDFVRIFGTTRMKKELAEQELRQRGQTPSKLE. Residues 432–452 form a helical membrane-spanning segment; the sequence is LIVVMYVIGFVWEEVQEIFAV. The Extracellular segment spans residues 453–512; the sequence is GMKSYLRNMWNFIDFLRNSLYVSVMCLRAFAYIQQATEIARDPQMAYIPREKWHDFDPQL. A helical transmembrane segment spans residues 513 to 533; sequence IAEGLFAAANVFSALKLVHLF. At 534–548 the chain is on the cytoplasmic side; that stretch reads SINPHLGPLQISLGR. The helical transmembrane segment at 549–569 threads the bilayer; the sequence is MVIDIVKFFFIYTLVLFAFAC. Topologically, residues 570-645 are extracellular; the sequence is GLNQLLWYFA…GIKSYTRFWG (76 aa). Residues 646–666 form a helical membrane-spanning segment; it reads LLMFGSYSVINVIVLLNLLIA. The Cytoplasmic segment spans residues 667–1124; the sequence is MMSNSYAMID…TSPQRPKHRN (458 aa). 2 calmodulin-binding regions span residues 710-728 and 853-895; these read SVKWVIRIFRKSSKTIDRQ and IPSK…SQIG. Disordered regions lie at residues 978–1013 and 1031–1124; these read RAMAANNTRSLTAPELKISRKSSPAPTPTPTPGVSH and LIAN…KHRN. Positions 1035 to 1063 are enriched in low complexity; it reads SAPSAPTAPPKKSAPTAPTPTYKPTTHAP. Basic and acidic residues-rich tracts occupy residues 1069-1081 and 1090-1106; these read GNRENTRASDGVR and HVVDLDEKGGHLGRDNV. Polar residues predominate over residues 1107–1118; it reads SDISSIASTSPQ.

This sequence belongs to the transient receptor (TC 1.A.4) family. STrpC subfamily. In terms of assembly, forms heteromultimers with Trpgamma and, to a lower extent, with trp. Interacts with Fkbp59 in vivo and is found in the inaD signaling complex. Expressed predominantly in the rhabdomeres of photoreceptor cells.

It localises to the membrane. Its subcellular location is the cell projection. The protein localises to the rhabdomere membrane. In terms of biological role, a light-sensitive calcium channel that is required for inositide-mediated Ca(2+) entry in the retina during phospholipase C (PLC)-mediated phototransduction. Required for vision in the dark and in dim light. Binds calmodulin. Trp and trpl act together in the light response, although it is unclear whether as heteromultimers or distinct units. Also forms a functional cation channel with Trpgamma. Activated by fatty acids, metabolic stress, inositols and GTP-binding proteins. The sequence is that of Transient-receptor-potential-like protein (trpl) from Drosophila melanogaster (Fruit fly).